The following is a 328-amino-acid chain: Ferredoxin--NADP reductase 2 (328 aa).

The FAD site is built by Thr-16, Glu-35, Gln-43, Tyr-48, Ile-88, Phe-123, Asp-284, and Thr-325.

The protein belongs to the ferredoxin--NADP reductase type 2 family. As to quaternary structure, homodimer. FAD serves as cofactor.

It carries out the reaction 2 reduced [2Fe-2S]-[ferredoxin] + NADP(+) + H(+) = 2 oxidized [2Fe-2S]-[ferredoxin] + NADPH. The polypeptide is Ferredoxin--NADP reductase 2 (Oceanobacillus iheyensis (strain DSM 14371 / CIP 107618 / JCM 11309 / KCTC 3954 / HTE831)).